The chain runs to 351 residues: Penicillolysin (351 aa).

The N-terminal stretch at 1 to 19 (MRFTTLSTAFLALAQNVYA) is a signal peptide. Positions 20 to 174 (FPIESDLSAL…TKALKPLDRR (155 aa)) are excised as a propeptide. N-linked (GlcNAc...) asparagine glycans are attached at residues Asn-52 and Asn-181. His-302 is a Zn(2+) binding site. The active site involves Glu-303. Residues His-306 and Asp-317 each contribute to the Zn(2+) site.

This sequence belongs to the peptidase M35 family. Zn(2+) is required as a cofactor.

The catalysed reaction is Preferential cleavage of bonds with hydrophobic residues in P1'. Also 3-Asn-|-Gln-4 and 8-Gly-|-Ser-9 bonds in insulin B chain.. This is Penicillolysin (plnC) from Penicillium citrinum.